Reading from the N-terminus, the 226-residue chain is MARILRASCLLSLLLAGFVPPGRGQEKSKTDCHGGMSGTIYEYGALTIDGEEYIPFKQYAGKYILFVNVASYUGLTDQYLELNALQEELGPFGLVILGFPSNQFGKQEPGENSEILPSLKYVRPGGGFVPNFQLFEKGDVNGEKEQKFYTFLKNSCPPTAELLGSPGRLFWEPMKIHDIRWNFEKFLVGPDGIPVMRWYHRTTVSNVKMDILSYMRRQAALSARGK.

A signal peptide spans 1-24 (MARILRASCLLSLLLAGFVPPGRG). Residue selenocysteine 73 is part of the active site. Selenocysteine 73 is a non-standard amino acid (selenocysteine).

This sequence belongs to the glutathione peroxidase family. In terms of assembly, homotetramer. As to expression, secreted in plasma.

Its subcellular location is the secreted. The catalysed reaction is 2 glutathione + H2O2 = glutathione disulfide + 2 H2O. It carries out the reaction tert-butyl hydroperoxide + 2 glutathione = tert-butanol + glutathione disulfide + H2O. Its function is as follows. Protects cells and enzymes from oxidative damage, by catalyzing the reduction of hydrogen peroxide, lipid peroxides and organic hydroperoxide, by glutathione. This is Glutathione peroxidase 3 from Mus musculus (Mouse).